A 284-amino-acid polypeptide reads, in one-letter code: Nucleoid occlusion protein (284 aa).

The segment at residues 143–162 (EALAQRVGKSQSAIANKMRL) is a DNA-binding region (H-T-H motif).

It belongs to the ParB family.

It is found in the cytoplasm. The protein resides in the nucleoid. Its function is as follows. Effects nucleoid occlusion by binding relatively nonspecifically to DNA and preventing the assembly of the division machinery in the vicinity of the nucleoid, especially under conditions that disturb the cell cycle. It helps to coordinate cell division and chromosome segregation by preventing the formation of the Z ring through the nucleoid, which would cause chromosome breakage. The chain is Nucleoid occlusion protein from Listeria monocytogenes serotype 4b (strain CLIP80459).